Here is a 305-residue protein sequence, read N- to C-terminus: N-acetylglucosamine-1-phosphotransferase subunit gamma (305 aa).

Positions 1-24 are cleaved as a signal peptide; that stretch reads MAAGLARLLLLLGLSAGGPAPAGA. One can recognise an MRH domain in the interval 69-171; it reads GKCFSLVEST…TFETPLVCHP (103 aa). An intrachain disulfide couples Cys71 to Cys84. Asn88 and Asn115 each carry an N-linked (GlcNAc...) asparagine glycan. 2 disulfides stabilise this stretch: Cys129/Cys157 and Cys142/Cys169. A DMAP1-binding domain is found at 176 to 279; sequence VYPTLPEALQ…YTRPTETSNL (104 aa). The interval 267–305 is disordered; it reads GIPYTRPTETSNLEHLGHETPRAKSPEQLRGDPGLRGSL. Over residues 281–296 the composition is skewed to basic and acidic residues; sequence HLGHETPRAKSPEQLR.

In terms of assembly, homodimer; disulfide-linked. Hexamer of two alpha (GNPTAB), two beta (GNPTAB) and two gamma (GNPTG) subunits; disulfide-linked. The alpha and/or the beta subunits of the enzyme constitute the catalytic subunits. Post-translationally, cys-245 mediates the formation of the interchain disulfide bond for formation of the homodimer. Cys-142, Cys-157 and Cys-169 are involved in intramolecular disulfide bonds formation. In terms of tissue distribution, widely expressed.

It is found in the secreted. The protein resides in the golgi apparatus. In terms of biological role, non-catalytic subunit of the N-acetylglucosamine-1-phosphotransferase complex, an enzyme that catalyzes the formation of mannose 6-phosphate (M6P) markers on high mannose type oligosaccharides in the Golgi apparatus. Binds and presents the high mannose glycans of the acceptor to the catalytic alpha and beta subunits (GNPTAB). Enhances the rate of N-acetylglucosamine-1-phosphate transfer to the oligosaccharides of acid hydrolase acceptors. The protein is N-acetylglucosamine-1-phosphotransferase subunit gamma (GNPTG) of Homo sapiens (Human).